Here is a 296-residue protein sequence, read N- to C-terminus: NAD kinase (296 aa).

Residue aspartate 73 is the Proton acceptor of the active site. NAD(+) contacts are provided by residues 73–74 (DG), lysine 78, 151–152 (NE), arginine 178, aspartate 180, and 191–196 (TAHAMS).

Belongs to the NAD kinase family. A divalent metal cation is required as a cofactor.

The protein localises to the cytoplasm. The enzyme catalyses NAD(+) + ATP = ADP + NADP(+) + H(+). Involved in the regulation of the intracellular balance of NAD and NADP, and is a key enzyme in the biosynthesis of NADP. Catalyzes specifically the phosphorylation on 2'-hydroxyl of the adenosine moiety of NAD to yield NADP. The polypeptide is NAD kinase (Francisella tularensis subsp. holarctica (strain FTNF002-00 / FTA)).